Consider the following 379-residue polypeptide: Cytochrome b (379 aa).

4 consecutive transmembrane segments (helical) span residues 34 to 54, 78 to 99, 114 to 134, and 179 to 199; these read FGSL…LLAM, WLIR…YLHI, WNTG…GYVL, and FFAL…IHLT. Residues His-84 and His-98 each contribute to the heme b site. Heme b contacts are provided by His-183 and His-197. A ubiquinone is bound at residue His-202. Transmembrane regions (helical) follow at residues 227–247, 289–309, 321–341, and 348–368; these read LKDI…AFFS, LGGV…PFLH, LSQV…WIGS, and FIII…ILFP.

The protein belongs to the cytochrome b family. In terms of assembly, the cytochrome bc1 complex contains 11 subunits: 3 respiratory subunits (MT-CYB, CYC1 and UQCRFS1), 2 core proteins (UQCRC1 and UQCRC2) and 6 low-molecular weight proteins (UQCRH/QCR6, UQCRB/QCR7, UQCRQ/QCR8, UQCR10/QCR9, UQCR11/QCR10 and a cleavage product of UQCRFS1). This cytochrome bc1 complex then forms a dimer. Requires heme b as cofactor.

It localises to the mitochondrion inner membrane. Its function is as follows. Component of the ubiquinol-cytochrome c reductase complex (complex III or cytochrome b-c1 complex) that is part of the mitochondrial respiratory chain. The b-c1 complex mediates electron transfer from ubiquinol to cytochrome c. Contributes to the generation of a proton gradient across the mitochondrial membrane that is then used for ATP synthesis. The sequence is that of Cytochrome b (MT-CYB) from Casuarius bennetti (Dwarf cassowary).